Here is a 360-residue protein sequence, read N- to C-terminus: Inhibin alpha chain (360 aa).

An N-terminal signal peptide occupies residues 1–17 (MWLQLLLLLLAPQGGHG). A propeptide spanning residues 18-60 (CHGLELDRELVLAKVRALFLDALGPPPVTGEGGDPGVRRLHRR) is cleaved from the precursor. A propeptide spans 61 to 226 (HAVGGFMRRG…PPSGGERARR (166 aa)) (inhibin alpha N-terminal region). N-linked (GlcNAc...) asparagine glycosylation is found at N140 and N262. Intrachain disulfides connect C256–C322, C285–C357, and C289–C359.

The protein belongs to the TGF-beta family. In terms of assembly, dimeric, linked by one or more disulfide bonds. Activin B is a dimer of alpha and beta-B. Inhibin A is a dimer of alpha and beta-A. Inhibin B is a dimer of alpha and beta-B. Interacts with TGFBR3L; this interaction regulates female fertility. In terms of processing, proteolytic processing yields a number of bioactive forms, consisting either solely of the mature alpha chain, of the most N-terminal propeptide linked through a disulfide bond to the mature alpha chain, or of the entire proprotein.

Its subcellular location is the secreted. Inhibins and activins inhibit and activate, respectively, the secretion of follitropin by the pituitary gland. Inhibins/activins are involved in regulating a number of diverse functions such as hypothalamic and pituitary hormone secretion, gonadal hormone secretion, germ cell development and maturation, erythroid differentiation, insulin secretion, nerve cell survival, embryonic axial development or bone growth, depending on their subunit composition. Inhibins appear to oppose the functions of activins. Its function is as follows. Inhibin A is a dimer of alpha/INHA and beta-A/INHBA that functions as a feedback regulator in the hypothalamic-pituitary-gonadal (HPG) axis. Inhibits the secretion of FSH from the anterior pituitary gland by acting on pituitary gonadotrope cells. Antagonizes activin A by binding to the proteoglycan, betaglycan, and forming a stable complex with and, thereby, sequestering type II activin receptors while excluding type I receptor. Functionally, inhibin B is a dimer of alpha and beta-B that plays a crucial role in the regulation of the reproductive system by inhibiting the secretion of follicle-stimulating hormone (FSH) from the anterior pituitary gland. Thereby, maintains reproductive homeostasis in both males and females. Acts as a more potent suppressor of FSH release than inhibin A. Functions as competitive receptor antagonist binding activin type II receptors with high affinity in the presence of the TGF-beta type III coreceptor/TGFBR3L. The sequence is that of Inhibin alpha chain (INHA) from Bos taurus (Bovine).